The following is a 209-amino-acid chain: Protein GrpE (209 aa).

2 stretches are compositionally biased toward basic and acidic residues: residues methionine 1–serine 16 and lysine 34–lysine 44. The tract at residues methionine 1–glutamate 61 is disordered.

Belongs to the GrpE family. In terms of assembly, homodimer.

The protein resides in the cytoplasm. In terms of biological role, participates actively in the response to hyperosmotic and heat shock by preventing the aggregation of stress-denatured proteins, in association with DnaK and GrpE. It is the nucleotide exchange factor for DnaK and may function as a thermosensor. Unfolded proteins bind initially to DnaJ; upon interaction with the DnaJ-bound protein, DnaK hydrolyzes its bound ATP, resulting in the formation of a stable complex. GrpE releases ADP from DnaK; ATP binding to DnaK triggers the release of the substrate protein, thus completing the reaction cycle. Several rounds of ATP-dependent interactions between DnaJ, DnaK and GrpE are required for fully efficient folding. In Methanosarcina acetivorans (strain ATCC 35395 / DSM 2834 / JCM 12185 / C2A), this protein is Protein GrpE.